A 1436-amino-acid polypeptide reads, in one-letter code: MGARASVLSGGKLDKWEKIRLRPRGKKRYKLKHIVWASRELERFAVNPSLLETAEGCRQILGQLQPALQTGSEELKSLYNAVATLYCVHQNIEVRDTKEALDKIEEEQNKSKKKAQQAAADTGNGSQVSQNYPIVQNLQGQMVHQAISPRTLNAWVKVVEEKAFSPEVIPMFSALSEGATPQDLNTMLNTVGGHQAAMQMLKETINEEAAEWDRLHPVHAGPIAPGQMREPRGSDIAGTTSTLQEQIGWMTNNPPIPVGEIYKRWIILGLNKIVRMYSPISILDIRQGPKEPFRDYVDRFYKTLRAEQASQDVKNWMTETFLVQNANPDCKTILKALGPAATLEEMMTACQGVGGPSHKARILAEAMSQVTNSATIMLQKGNFRDQRKIVKCFNCGKVGHIAKNCRAPRKKGCWKCGKEGHQMKDCTNEGRQANFLRENLAFPQGKARELSSEQTRANSPTRRELQVWGRDNSLSEAGEDRQGTVSFSFPQITLWQRPIVTVKIGGQLKEALLDTGADDTVLEEMNLPGKWKPKMIGGIGGFIKVRQYDQILIEICGHKAIGTVLVGPTPVNIIGRNLLTQIGCTLNFPISPIETVPVKLKPGMDGPKVKQWPLTEEKIKALVEICTEMEKEGKISKIGPENPYNTPVFAIKKKDSTKWRKLVDFRELNKRTQDFWEVQLGIPHPAGLKKKKSVTVLDVGDAYFSVPLDKEFRKYTAFTIPSINNETPRIRYQYNVLPQGWKGSPAIFQSSMTKILEPFKKQNPEIVIYQYMDDLYVGSDLEIGQHRIKIEELREHLLKWGFTTPDKKHQKEPPFLWMGYELHPDKWTVQPIVLPEKDSWTVNDIQKLVGKLNWASQIYAGIKVKQLCKLLRGTKALTEVVQLTKEAELELAENREILKEPVHGVYYDPSKDLIAEIQKQGQGQWTYQIYQEPFKNLKTGKYARMRGAHTNDVKQLTEAVQKVATESIVIWGKTPKFKLPIQKETWEAWWTEYWQATWIPEWEFVNTPPLVKLWYQLEKEPIIGAETFYVDGAANRETKLGKAGYVTDRGRQKVVSLTDTTNQKTELQAIHLALQDSGLEVNIVTDSQYALGIIQAQPDKSESELVSQIIEQLIKKEKVYLAWVPAHKGIGGNEQVDRLVSTGIRKVLFLDGIDKAQDEHEKYHSNWRAMASDFNLPPVVAKEIVASCDKCQLKGEAMHGQVDCSPGIWQLDCTHLEGKIILVAVHVASGYIEAEVIPAETGQETAYFILKLAGRWPVKVIHTDNGSNFTSTTVKAACWWAGIKQEFGIPYNPQSQGVVESMNKQLKQIIGQVRDQAEHLKTAVQMAVFIHNFKRKGGIGGYSAGERIVDIIATDIQTKELQKQITKIQNFRVYYRDSRDPLWKGHAKLLWKGEGAVVIQDNSDIKVVPRRKAKIIRDYGKQMAGDDCVASRQDED.

Glycine 2 is lipidated: N-myristoyl glycine; by host. Residues 7–31 form an interaction with Gp41 region; the sequence is VLSGGKLDKWEKIRLRPRGKKRYKL. Positions 8-43 are interaction with host CALM1; that stretch reads LSGGKLDKWEKIRLRPRGKKRYKLKHIVWASRELER. Residues 12–19 form an interaction with host AP3D1 region; that stretch reads KLDKWEKI. An interaction with membrane phosphatidylinositol 4,5-bisphosphate and RNA region spans residues 14–33; that stretch reads DKWEKIRLRPRGKKRYKLKH. Positions 16–22 match the Nuclear export signal motif; the sequence is WEKIRLR. A Nuclear localization signal motif is present at residues 26-32; that stretch reads KKRYKLK. An interaction with membrane phosphatidylinositol 4,5-bisphosphate region spans residues 73–77; the sequence is EELKS. Residues 106 to 128 are disordered; that stretch reads EEQNKSKKKAQQAAADTGNGSQV. Position 132 is a phosphotyrosine; by host (tyrosine 132). Positions 189 to 227 are interaction with human PPIA/CYPA and NUP153; that stretch reads NTVGGHQAAMQMLKETINEEAAEWDRLHPVHAGPIAPGQ. The tract at residues 277–363 is dimerization/Multimerization of capsid protein p24; the sequence is YSPISILDIR…GGPSHKARIL (87 aa). CCHC-type zinc fingers lie at residues 390–407 and 411–428; these read VKCF…NCRA and KGCW…DCTN. Residues 446 to 465 are disordered; sequence KARELSSEQTRANSPTRREL. Residues 490–494 form a dimerization of protease region; it reads PQITL. One can recognise a Peptidase A2 domain in the interval 509 to 578; sequence KEALLDTGAD…TPVNIIGRNL (70 aa). The active-site For protease activity; shared with dimeric partner is aspartate 514. 2 dimerization of protease regions span residues 538–544 and 577–589; these read GIGGFIK and NLLT…LNFP. Residues 632–822 enclose the Reverse transcriptase domain; it reads EGKISKIGPE…PPFLWMGYEL (191 aa). Mg(2+) is bound by residues aspartate 698, aspartate 773, and aspartate 774. The RT 'primer grip' stretch occupies residues 815–823; it reads FLWMGYELH. The Tryptophan repeat motif signature appears at 986–1002; that stretch reads WEAWWTEYWQATWIPEW. Residues 1022-1145 form the RNase H type-1 domain; it reads IIGAETFYVD…VDRLVSTGIR (124 aa). Mg(2+) is bound by residues aspartate 1031, glutamate 1066, aspartate 1086, and aspartate 1137. The segment at 1151–1192 adopts an Integrase-type zinc-finger fold; that stretch reads DGIDKAQDEHEKYHSNWRAMASDFNLPPVVAKEIVASCDKCQ. Histidine 1160, histidine 1164, cysteine 1188, and cysteine 1191 together coordinate Zn(2+). An Integrase catalytic domain is found at 1202-1352; it reads VDCSPGIWQL…SAGERIVDII (151 aa). Mg(2+) contacts are provided by aspartate 1212, aspartate 1264, and glutamate 1300. Residues 1371-1418 constitute a DNA-binding region (integrase-type); that stretch reads FRVYYRDSRDPLWKGHAKLLWKGEGAVVIQDNSDIKVVPRRKAKIIRD.

In terms of assembly, homotrimer; further assembles as hexamers of trimers. Interacts with gp41 (via C-terminus). Interacts with host CALM1; this interaction induces a conformational change in the Matrix protein, triggering exposure of the myristate group. Interacts with host AP3D1; this interaction allows the polyprotein trafficking to multivesicular bodies during virus assembly. Part of the pre-integration complex (PIC) which is composed of viral genome, matrix protein, Vpr and integrase. As to quaternary structure, homodimer; the homodimer further multimerizes as homohexamers or homopentamers. Interacts with human PPIA/CYPA; This interaction stabilizes the capsid. Interacts with human NUP153. Interacts with host PDZD8; this interaction stabilizes the capsid. Interacts with monkey TRIM5; this interaction destabilizes the capsid. Homodimer, whose active site consists of two apposed aspartic acid residues. In terms of assembly, heterodimer of p66 RT and p51 RT (RT p66/p51). Heterodimerization of RT is essential for DNA polymerase activity. The overall folding of the subdomains is similar in p66 RT and p51 RT but the spatial arrangements of the subdomains are dramatically different. As to quaternary structure, homotetramer; may further associate as a homohexadecamer. Part of the pre-integration complex (PIC) which is composed of viral genome, matrix protein, Vpr and integrase. Interacts with human SMARCB1/INI1 and human PSIP1/LEDGF isoform 1. Interacts with human KPNA3; this interaction might play a role in nuclear import of the pre-integration complex. Interacts with human NUP153; this interaction might play a role in nuclear import of the pre-integration complex. It depends on Mg(2+) as a cofactor. In terms of processing, specific enzymatic cleavages by the viral protease yield mature proteins. The protease is released by autocatalytic cleavage. The polyprotein is cleaved during and after budding, this process is termed maturation. Proteolytic cleavage of p66 RT removes the RNase H domain to yield the p51 RT subunit. Nucleocapsid protein p7 might be further cleaved after virus entry. Tyrosine phosphorylated presumably in the virion by a host kinase. Phosphorylation is apparently not a major regulator of membrane association. Post-translationally, phosphorylated possibly by host MAPK1; this phosphorylation is necessary for Pin1-mediated virion uncoating. In terms of processing, methylated by host PRMT6, impairing its function by reducing RNA annealing and the initiation of reverse transcription.

It localises to the host cell membrane. It is found in the host endosome. Its subcellular location is the host multivesicular body. The protein resides in the virion membrane. The protein localises to the host nucleus. It localises to the host cytoplasm. It is found in the virion. The enzyme catalyses Specific for a P1 residue that is hydrophobic, and P1' variable, but often Pro.. The catalysed reaction is Endohydrolysis of RNA in RNA/DNA hybrids. Three different cleavage modes: 1. sequence-specific internal cleavage of RNA. Human immunodeficiency virus type 1 and Moloney murine leukemia virus enzymes prefer to cleave the RNA strand one nucleotide away from the RNA-DNA junction. 2. RNA 5'-end directed cleavage 13-19 nucleotides from the RNA end. 3. DNA 3'-end directed cleavage 15-20 nucleotides away from the primer terminus.. It catalyses the reaction 3'-end directed exonucleolytic cleavage of viral RNA-DNA hybrid.. It carries out the reaction DNA(n) + a 2'-deoxyribonucleoside 5'-triphosphate = DNA(n+1) + diphosphate. Protease: The viral protease is inhibited by many synthetic protease inhibitors (PIs), such as amprenavir, atazanavir, indinavir, loprinavir, nelfinavir, ritonavir and saquinavir. Use of protease inhibitors in tritherapy regimens permit more ambitious therapeutic strategies. Reverse transcriptase/ribonuclease H: RT can be inhibited either by nucleoside RT inhibitors (NRTIs) or by non nucleoside RT inhibitors (NNRTIs). NRTIs act as chain terminators, whereas NNRTIs inhibit DNA polymerization by binding a small hydrophobic pocket near the RT active site and inducing an allosteric change in this region. Classical NRTIs are abacavir, adefovir (PMEA), didanosine (ddI), lamivudine (3TC), stavudine (d4T), tenofovir (PMPA), zalcitabine (ddC), and zidovudine (AZT). Classical NNRTIs are atevirdine (BHAP U-87201E), delavirdine, efavirenz (DMP-266), emivirine (I-EBU), and nevirapine (BI-RG-587). The tritherapies used as a basic effective treatment of AIDS associate two NRTIs and one NNRTI. Its function is as follows. Mediates, with Gag polyprotein, the essential events in virion assembly, including binding the plasma membrane, making the protein-protein interactions necessary to create spherical particles, recruiting the viral Env proteins, and packaging the genomic RNA via direct interactions with the RNA packaging sequence (Psi). Gag-Pol polyprotein may regulate its own translation, by the binding genomic RNA in the 5'-UTR. At low concentration, the polyprotein would promote translation, whereas at high concentration, the polyprotein would encapsidate genomic RNA and then shut off translation. Targets the polyprotein to the plasma membrane via a multipartite membrane-binding signal, that includes its myristoylated N-terminus. Matrix protein is part of the pre-integration complex. Implicated in the release from host cell mediated by Vpu. Binds to RNA. In terms of biological role, forms the conical core that encapsulates the genomic RNA-nucleocapsid complex in the virion. Most core are conical, with only 7% tubular. The core is constituted by capsid protein hexamer subunits. The core is disassembled soon after virion entry. Host restriction factors such as TRIM5-alpha or TRIMCyp bind retroviral capsids and cause premature capsid disassembly, leading to blocks in reverse transcription. Capsid restriction by TRIM5 is one of the factors which restricts HIV-1 to the human species. Host PIN1 apparently facilitates the virion uncoating. On the other hand, interactions with PDZD8 or CYPA stabilize the capsid. Functionally, encapsulates and protects viral dimeric unspliced genomic RNA (gRNA). Binds these RNAs through its zinc fingers. Acts as a nucleic acid chaperone which is involved in rearangement of nucleic acid secondary structure during gRNA retrotranscription. Also facilitates template switch leading to recombination. As part of the polyprotein, participates in gRNA dimerization, packaging, tRNA incorporation and virion assembly. Its function is as follows. Aspartyl protease that mediates proteolytic cleavages of Gag and Gag-Pol polyproteins during or shortly after the release of the virion from the plasma membrane. Cleavages take place as an ordered, step-wise cascade to yield mature proteins. This process is called maturation. Displays maximal activity during the budding process just prior to particle release from the cell. Also cleaves Nef and Vif, probably concomitantly with viral structural proteins on maturation of virus particles. Hydrolyzes host EIF4GI and PABP1 in order to shut off the capped cellular mRNA translation. The resulting inhibition of cellular protein synthesis serves to ensure maximal viral gene expression and to evade host immune response. Also mediates cleavage of host YTHDF3. Mediates cleavage of host CARD8, thereby activating the CARD8 inflammasome, leading to the clearance of latent HIV-1 in patient CD4(+) T-cells after viral reactivation; in contrast, HIV-1 can evade CARD8-sensing when its protease remains inactive in infected cells prior to viral budding. Multifunctional enzyme that converts the viral RNA genome into dsDNA in the cytoplasm, shortly after virus entry into the cell. This enzyme displays a DNA polymerase activity that can copy either DNA or RNA templates, and a ribonuclease H (RNase H) activity that cleaves the RNA strand of RNA-DNA heteroduplexes in a partially processive 3' to 5' endonucleasic mode. Conversion of viral genomic RNA into dsDNA requires many steps. A tRNA(3)-Lys binds to the primer-binding site (PBS) situated at the 5'-end of the viral RNA. RT uses the 3' end of the tRNA primer to perform a short round of RNA-dependent minus-strand DNA synthesis. The reading proceeds through the U5 region and ends after the repeated (R) region which is present at both ends of viral RNA. The portion of the RNA-DNA heteroduplex is digested by the RNase H, resulting in a ssDNA product attached to the tRNA primer. This ssDNA/tRNA hybridizes with the identical R region situated at the 3' end of viral RNA. This template exchange, known as minus-strand DNA strong stop transfer, can be either intra- or intermolecular. RT uses the 3' end of this newly synthesized short ssDNA to perform the RNA-dependent minus-strand DNA synthesis of the whole template. RNase H digests the RNA template except for two polypurine tracts (PPTs) situated at the 5'-end and near the center of the genome. It is not clear if both polymerase and RNase H activities are simultaneous. RNase H probably can proceed both in a polymerase-dependent (RNA cut into small fragments by the same RT performing DNA synthesis) and a polymerase-independent mode (cleavage of remaining RNA fragments by free RTs). Secondly, RT performs DNA-directed plus-strand DNA synthesis using the PPTs that have not been removed by RNase H as primers. PPTs and tRNA primers are then removed by RNase H. The 3' and 5' ssDNA PBS regions hybridize to form a circular dsDNA intermediate. Strand displacement synthesis by RT to the PBS and PPT ends produces a blunt ended, linear dsDNA copy of the viral genome that includes long terminal repeats (LTRs) at both ends. In terms of biological role, catalyzes viral DNA integration into the host chromosome, by performing a series of DNA cutting and joining reactions. This enzyme activity takes place after virion entry into a cell and reverse transcription of the RNA genome in dsDNA. The first step in the integration process is 3' processing. This step requires a complex comprising the viral genome, matrix protein, Vpr and integrase. This complex is called the pre-integration complex (PIC). The integrase protein removes 2 nucleotides from each 3' end of the viral DNA, leaving recessed CA OH's at the 3' ends. In the second step, the PIC enters cell nucleus. This process is mediated through integrase and Vpr proteins, and allows the virus to infect a non dividing cell. This ability to enter the nucleus is specific of lentiviruses, other retroviruses cannot and rely on cell division to access cell chromosomes. In the third step, termed strand transfer, the integrase protein joins the previously processed 3' ends to the 5' ends of strands of target cellular DNA at the site of integration. The 5'-ends are produced by integrase-catalyzed staggered cuts, 5 bp apart. A Y-shaped, gapped, recombination intermediate results, with the 5'-ends of the viral DNA strands and the 3' ends of target DNA strands remaining unjoined, flanking a gap of 5 bp. The last step is viral DNA integration into host chromosome. This involves host DNA repair synthesis in which the 5 bp gaps between the unjoined strands are filled in and then ligated. Since this process occurs at both cuts flanking the HIV genome, a 5 bp duplication of host DNA is produced at the ends of HIV-1 integration. Alternatively, Integrase may catalyze the excision of viral DNA just after strand transfer, this is termed disintegration. The chain is Gag-Pol polyprotein (gag-pol) from Human immunodeficiency virus type 1 group M subtype B (isolate RF/HAT3) (HIV-1).